The following is a 439-amino-acid chain: Xaa-Pro dipeptidase (439 aa).

Mn(2+) contacts are provided by D244, D255, H335, E380, and E419.

This sequence belongs to the peptidase M24B family. Bacterial-type prolidase subfamily. The cofactor is Mn(2+).

The catalysed reaction is Xaa-L-Pro dipeptide + H2O = an L-alpha-amino acid + L-proline. Splits dipeptides with a prolyl residue in the C-terminal position. This is Xaa-Pro dipeptidase from Shewanella sp. (strain MR-7).